The primary structure comprises 311 residues: MALPIIIDCDPGHDDAIALVLALASPELEVKAITSSAGNQTPEKTLRNVLRMLTLLKRPDIPVAGGAVKPLMRELIIADNVHGESGLNGPALPEPSFAPQSGTAVELMAKTLRESAQPVTIVSTGPQTNVALLLNSHPELHTKIARIVIMGGAMALGNWTPAAEFNIYVDPEAAEIVFQSGIPVVMAGLDVTHKAQIHAADIERFRAIGNPISTIVAELLDFFMEYHKDEKWGFVGAPLHDPCTIAWLLKPEIFTTVERWVGVETKGKYTQGMTVVDYYFLTGNKPNATVMVDVDSQGFVDLLAERLQYYA.

Residue His-240 is part of the active site.

The protein belongs to the IUNH family. RihA subfamily.

Its function is as follows. Hydrolyzes cytidine or uridine to ribose and cytosine or uracil, respectively. The sequence is that of Pyrimidine-specific ribonucleoside hydrolase RihA from Salmonella gallinarum (strain 287/91 / NCTC 13346).